Reading from the N-terminus, the 464-residue chain is Clusterin-like protein 1 (464 aa).

Positions 1–20 are cleaved as a signal peptide; that stretch reads MQPPLFVISVYLLWLKYCDS. A coiled-coil region spans residues 56-109; it reads IKQMKIMMERREEEHAKLMKALKKCKEEKQEAQKLMNEVQERLEEEEKLCQASS. 5 disulfide bridges follow: cysteine 105–cysteine 331, cysteine 116–cysteine 323, cysteine 119–cysteine 320, cysteine 124–cysteine 313, and cysteine 131–cysteine 303. N-linked (GlcNAc...) asparagine glycans are attached at residues asparagine 195, asparagine 255, asparagine 309, asparagine 349, asparagine 398, and asparagine 429.

It belongs to the clusterin family.

The protein localises to the secreted. This Rattus norvegicus (Rat) protein is Clusterin-like protein 1.